A 177-amino-acid polypeptide reads, in one-letter code: Large ribosomal subunit protein uL6 (177 aa).

This sequence belongs to the universal ribosomal protein uL6 family. In terms of assembly, part of the 50S ribosomal subunit.

Functionally, this protein binds to the 23S rRNA, and is important in its secondary structure. It is located near the subunit interface in the base of the L7/L12 stalk, and near the tRNA binding site of the peptidyltransferase center. The protein is Large ribosomal subunit protein uL6 of Psychromonas ingrahamii (strain DSM 17664 / CCUG 51855 / 37).